The sequence spans 189 residues: MAVAPFDERSTMMYLAAEEPQMPLLPVWPEVVIGLICFGIVFFVFSKKLLPVINKTLEERREAIEGGIEKAESAQIEAQSVLEQYKAQLAEARHEAARLRQEAQEQGAVIIQEMKAEGQRQREEIIAAGHTQIEADRKAAASALRQDVGKLATDLAGKLVGESLQDHARQSGTVDRFLDELEAKAEAAR.

A helical membrane pass occupies residues 25 to 45 (LPVWPEVVIGLICFGIVFFVF).

This sequence belongs to the ATPase B chain family. F-type ATPases have 2 components, F(1) - the catalytic core - and F(0) - the membrane proton channel. F(1) has five subunits: alpha(3), beta(3), gamma(1), delta(1), epsilon(1). F(0) has three main subunits: a(1), b(2) and c(10-14). The alpha and beta chains form an alternating ring which encloses part of the gamma chain. F(1) is attached to F(0) by a central stalk formed by the gamma and epsilon chains, while a peripheral stalk is formed by the delta and b chains.

The protein localises to the cell membrane. In terms of biological role, f(1)F(0) ATP synthase produces ATP from ADP in the presence of a proton or sodium gradient. F-type ATPases consist of two structural domains, F(1) containing the extramembraneous catalytic core and F(0) containing the membrane proton channel, linked together by a central stalk and a peripheral stalk. During catalysis, ATP synthesis in the catalytic domain of F(1) is coupled via a rotary mechanism of the central stalk subunits to proton translocation. Component of the F(0) channel, it forms part of the peripheral stalk, linking F(1) to F(0). The chain is ATP synthase subunit b from Streptomyces griseus subsp. griseus (strain JCM 4626 / CBS 651.72 / NBRC 13350 / KCC S-0626 / ISP 5235).